Here is a 151-residue protein sequence, read N- to C-terminus: Globin CTT-X (151 aa).

Positions 6-150 (TLDAHEVEQV…AFSVIFEVLE (145 aa)) constitute a Globin domain. The heme b site is built by histidine 64 and histidine 99.

This sequence belongs to the globin family. In terms of assembly, homodimer.

The protein is Globin CTT-X (CTT-10) of Chironomus thummi thummi (Midge).